Consider the following 463-residue polypeptide: Ribosomal protein uS12 methylthiotransferase RimO (463 aa).

An MTTase N-terminal domain is found at 11 to 126 (PKIGFVSLGC…VMEVVHTHCP (116 aa)). Residues C20, C56, C85, C161, C165, and C168 each contribute to the [4Fe-4S] cluster site. The Radical SAM core domain occupies 147-388 (LTPRHYAYLK…MAVAEEVSTA (242 aa)). A TRAM domain is found at 391–463 (QRRVGQTMQV…QGHDLVGVPV (73 aa)).

This sequence belongs to the methylthiotransferase family. RimO subfamily. The cofactor is [4Fe-4S] cluster.

It is found in the cytoplasm. It carries out the reaction L-aspartate(89)-[ribosomal protein uS12]-hydrogen + (sulfur carrier)-SH + AH2 + 2 S-adenosyl-L-methionine = 3-methylsulfanyl-L-aspartate(89)-[ribosomal protein uS12]-hydrogen + (sulfur carrier)-H + 5'-deoxyadenosine + L-methionine + A + S-adenosyl-L-homocysteine + 2 H(+). Its function is as follows. Catalyzes the methylthiolation of an aspartic acid residue of ribosomal protein uS12. This chain is Ribosomal protein uS12 methylthiotransferase RimO, found in Acidovorax sp. (strain JS42).